Consider the following 460-residue polypeptide: Tyrosine phenol-lyase (460 aa).

The residue at position 260 (lysine 260) is an N6-(pyridoxal phosphate)lysine.

Belongs to the beta-eliminating lyase family. In terms of assembly, homotetramer. Pyridoxal 5'-phosphate is required as a cofactor.

The enzyme catalyses L-tyrosine + H2O = phenol + pyruvate + NH4(+). The polypeptide is Tyrosine phenol-lyase (Clostridium tetani (strain Massachusetts / E88)).